The primary structure comprises 268 residues: Undecaprenyl-diphosphatase (268 aa).

Helical transmembrane passes span 8–28 (VILG…TGHL), 41–61 (AFWD…IVGL), 83–103 (FVIG…VAGK), 108–128 (VLFN…ILLW), 144–164 (FPLL…IPGV), 184–204 (AAEF…AYDF), 218–238 (IVAI…KTFL), and 246–266 (FVVF…ALAL).

It belongs to the UppP family.

Its subcellular location is the cell inner membrane. The catalysed reaction is di-trans,octa-cis-undecaprenyl diphosphate + H2O = di-trans,octa-cis-undecaprenyl phosphate + phosphate + H(+). Functionally, catalyzes the dephosphorylation of undecaprenyl diphosphate (UPP). Confers resistance to bacitracin. The polypeptide is Undecaprenyl-diphosphatase (Bradyrhizobium diazoefficiens (strain JCM 10833 / BCRC 13528 / IAM 13628 / NBRC 14792 / USDA 110)).